Consider the following 373-residue polypeptide: Arabinonate dehydratase (373 aa).

Asp199, Glu225, and Glu251 together coordinate Mg(2+).

It belongs to the mandelate racemase/muconate lactonizing enzyme family. In terms of assembly, homooctamer. The cofactor is Mg(2+).

It catalyses the reaction D-arabinonate = 2-dehydro-3-deoxy-D-arabinonate + H2O. Its activity is regulated as follows. Inhibited by substrate levels above 8 mM. Catalyzes the dehydration of D-arabinonate to 2-keto-3-deoxy-D-arabinonate. Participates in a pentose oxidation pathway that converts D-arabinonate to 2-oxoglutarate. In Saccharolobus solfataricus (strain ATCC 35092 / DSM 1617 / JCM 11322 / P2) (Sulfolobus solfataricus), this protein is Arabinonate dehydratase.